Here is a 313-residue protein sequence, read N- to C-terminus: 2,3-dihydroxyphenylpropionate/2,3-dihydroxicinnamic acid 1,2-dioxygenase (313 aa).

Catalysis depends on His115, which acts as the Proton donor. His179 (proton acceptor) is an active-site residue.

This sequence belongs to the LigB/MhpB extradiol dioxygenase family. As to quaternary structure, homotetramer. Requires Fe(2+) as cofactor.

It carries out the reaction 3-(2,3-dihydroxyphenyl)propanoate + O2 = (2Z,4E)-2-hydroxy-6-oxonona-2,4-dienedioate + H(+). The enzyme catalyses (2E)-3-(2,3-dihydroxyphenyl)prop-2-enoate + O2 = (2Z,4E,7E)-2-hydroxy-6-oxonona-2,4,7-trienedioate + H(+). The protein operates within aromatic compound metabolism; 3-phenylpropanoate degradation. Functionally, catalyzes the non-heme iron(II)-dependent oxidative cleavage of 2,3-dihydroxyphenylpropionic acid and 2,3-dihydroxicinnamic acid into 2-hydroxy-6-ketononadienedioate and 2-hydroxy-6-ketononatrienedioate, respectively. Also catalyzes the cleavage of catechol. In Cupriavidus necator (Alcaligenes eutrophus), this protein is 2,3-dihydroxyphenylpropionate/2,3-dihydroxicinnamic acid 1,2-dioxygenase (mhpB).